Reading from the N-terminus, the 532-residue chain is 2,3-bisphosphoglycerate-independent phosphoglycerate mutase (532 aa).

Asp15 and Ser65 together coordinate Mn(2+). Ser65 serves as the catalytic Phosphoserine intermediate. Substrate is bound by residues His126, 156–157, Arg188, Arg194, 258–261, and Lys331; these read RD and RPDR. Mn(2+)-binding residues include Asp398, His402, Asp439, His440, and His457.

It belongs to the BPG-independent phosphoglycerate mutase family. Monomer. Mn(2+) serves as cofactor.

The catalysed reaction is (2R)-2-phosphoglycerate = (2R)-3-phosphoglycerate. It participates in carbohydrate degradation; glycolysis; pyruvate from D-glyceraldehyde 3-phosphate: step 3/5. Its function is as follows. Catalyzes the interconversion of 2-phosphoglycerate and 3-phosphoglycerate. The chain is 2,3-bisphosphoglycerate-independent phosphoglycerate mutase from Synechocystis sp. (strain ATCC 27184 / PCC 6803 / Kazusa).